The chain runs to 3165 residues: MTDKSIIILSLMVFHSSFINGKTCRRELVEEWHPQPSSHVVNWTLTENICLDYYRDCWFLGVNTKIDTSGNQVVPQICPLQIQLGDILVISSEPSLQFPEINLMNVSETSFIGCVQNTTTEDQLLFGCRLKGMHTVNSKWLSVGTHYFITVMASGPSPCPLGLRLNVTVKQQFCQESLSSEFCSGHGKCLSEAWSKTYSCHCQPPFSGKYCQELDACSFKPCKNDGSCINKRGNWDEQGYECVCHPPFTGKNCSEIIVQCQPHVCFHGNCSNITSNSFICECDEQFSGPFCEVSTKPCVSLLCWKRGICPNSSSAYTYECPKGPSSQNGETDVSECSLILCENGTDGIKISNDVMCICSPIFTDLLCKSFQTSCESFPLKNNATFKKCEKDYHCSCMSGFTGKNCEKVIDHCKLLSINCLNEEWCFNIIGRFKYVCIPGCTKNPFWFLKNVHLIHLHPCYYGITFHGICQDKGPAHFEYVWQLGFTGSEGEKCQGVIDAYFFLTANCTEDAIYVNNPEDNNSSCSFPCEGTKEICANGCSCLSEEDNQEYRYLCFLRWTSNMYLENITDDQENKSQHEAICEDEINRPRCSCSLSYIGRLCVVNVDYCLGNQSISVHGLCLALSHNCNCSDLQKYEGNICEIDIEDCKSVSCKNGTTSIHLRGYFFYKCVPGFKGTRCEIDLDECALHPCKSGATCIDQPGNYFCQCGPPFKVVDGFSCLCNPGYVGTRCEQNIDNCILNAFEHNSTYKDLHLSYQCVCLSGWEGNFCEQESNECKMNPCKNNSTCTDLYKSYRCECTSGWTGQNCSEEINECDSDPCMNGGLCHESTIPGQFVCLCPPLYTGQFCHQRYNPCDLLNNPCRNNSTCLALVDGNQHCICREEFEGKHCEIDVKECLFLSCQDYGDCEDMVNNFRCICRPGFSGSLCEIEINECSSEPCKNNGTCVDLTNRFFCNCEPGYHGPFCELEVNKCKISPCLDEENCVYRTDRYNCLCAPGYTGINCEINLDECLSEPCLHDGVCIDGINHYTCDCKSGFFGTHCETNANDCLSNPCLHGRCTEPINEYPCSCDADGTSIQCKIKINDCTSMPCMNEGFCQKSAHGFTCICPRGYTGAYCEKSIDNCAEPELNSVICLNGGICVDGPGHTFDCRCLPGFSGQFCEININECSSSPCLHGANCEDHINGYVCKCQPGWSGHHCEKELECVPNSCVHQLCMENEPGSTCLCTPGFMTCSIGLLCGDEIRRITCLTPSFQRTDPISTQTHTVPPSETLVSSFPSIKATRIPTIMDTYPVDQGPKQTGIVKHDILPTTGLATLRISTPLKSYLLEELIVTRELSAKHSLLSSTDVSSSPFLNFGIHDPAQIVQDKTSVSHMRIRTSAATLGFFFPDRRARTSFIRSSLMSDFIFPTQSLLFENYQTVASSATPTTSVIRSIPGADIELNRHSLLSRGFLLTAASISATPVVSRGAQEDIKEYSAVSLISRREHWRSLISSMSPIFPAKKIISKQVTILNSSALHRFGTKAFIPSEYQAITEASSNQRLTNIKSQAADSLRELSQTCATCSMTEIKSSHEFSDQVLHSKQSHFYETFWMNSAILASWYALMGAQTITSGHSFSSATEITPSVAFTEVPSLFPSKKSAKRTILSSSLEESITLSSNLDVNLCLHKTCLSIVPSQTISSDLMNSDLTSELTTDELSVSENILKLLKIRQYGITTGPTEVLNQDSLLDMEKSKGSHTPFKLHPSDSSLDLELNLRSYPDVTLKTYSEITLANDLKNNLPPLTGSVPDFSEVTTNVAFYTVSATPALPIQTSSSMSVITPDWPYFIDYMTSLNKEVKTYSEWSKWELQPSVQYQEFPTASWHLPFTRSLTLSSLESIVAPQQLMISDFSCVCYYGDSYLEFQNVVLNPQNNISLEFQTFSSYGLLLYVKQDSNLVDGFFIQLSIENGTLKYHFYCPGEAKFKSINTAIRVDDGQKYTLLIRQELDPCKAELTILGRNTQTCESINHVLGKPLPKSGSVFIGGFPDLRGKIQMPVPVKNFTGCIEVIEINNWRSFIPSKAVRNYHINNCRSQGLMLSPTASFVDASDVTQGVDAMWTSVSPSVAAPSVCQEDVCHNGGTCRPIFLSSGIVSFQCDCPLHFTGRFCEKDAGLFFPSFSGNSYLELPFLNFVLEKEHNRTVTIYLTIKTNSLNGTILYSNGNNFGKQFLHLFLVEGKPSVKYGCGNSQNILTVSANYSINTNAFTPITVRHTMPIGSPGVVCMIEMTADGKPPVQKKDTEISHASQVYFESMFLGHIPENVQIHKKAGSVYGFRGCILDLQINNKEFFIIDEARRGKNIENCHVPWCAHHLCRNNGTCLSDSENLFCECPRLYSGKLCQFASCENNPCGNGATCVPKSGTDIICLCPYGRSGPLCTDAINITQPRFSGTDAFGYTSFLAYSRISDISFHYEFHLKFQLANNHSALQNNLIFFTGQKGHGLNGDDFLAVGLLNGSVVYSYNLGSGIASIRSDPLNLSLGVHTVHLGKFFQEGWLKVDDHKNKSIIAPGRLVGLNVFSQFYVGGYSEYTPDLLPNGADFKNGFQGCIFTLQVRTEKDGHFRGLGNPEGHPNAGRSVGQCHASPCSLMKCGNGGTCIESGTSVYCNCTTRWKGAFCTETVSICDPEHDPPHHCSRGATCISLPHGYTCFCPLGTTGIYCEQALILTVILEKPKPAEWKVKKEALSISDPSFRSSELSWMSFASFHVRKKTHIQLQFQPLAADGILFYAAQHLKAQSGDFLCISLVNGSVQLRYNLGDRTIILETLQKVTINGSTWHIIKAGRVGAEGYLDLDGINVTEKASTKMSSLDTNTDFYIGGVSSLNLVNPMAIENEPVGFHGCIRQVIINYQELQLTEFGAKGGSNVGDCDGTACGYNTCRNGGECRVNGTTFSCRCLPDWAGNICNQSAYCLNNLCLHQSLCIPDQSFSYSCLCTLGWVGRYCENKTSFTTAKFMGNSYIKYIDPNYRMRNLQFTTISLNFSTTKTEGLIIWMGIAQNEENDFLAIGLHNQTLKIAVNLGERISVPMSYNNGTFCCNKWHHVIVIQNQTLIKAYVNNSLILSEDIDPHKNFVALNYEGICYLGGFEYGRKVNIVTQEIFKTNFVGKIKDVVFFQDPKKIELIKLEGYNVYDGDEQNEVT.

Positions 1-21 are cleaved as a signal peptide; the sequence is MTDKSIIILSLMVFHSSFING. 4 N-linked (GlcNAc...) asparagine glycosylation sites follow: asparagine 42, asparagine 105, asparagine 117, and asparagine 166. 3 EGF-like domains span residues 170–212, 213–254, and 256–292; these read KQQF…KYCQ, ELDA…KNCS, and IIVQCQPHVCFHGNCSNITSNSFICECDEQFSGPFCE. Intrachain disulfides connect cysteine 174/cysteine 189, cysteine 183/cysteine 200, cysteine 202/cysteine 211, cysteine 217/cysteine 228, cysteine 222/cysteine 242, cysteine 244/cysteine 253, cysteine 260/cysteine 270, cysteine 265/cysteine 280, and cysteine 282/cysteine 291. Asparagine 252, asparagine 269, and asparagine 272 each carry an N-linked (GlcNAc...) asparagine glycan. Asparagine 311 and asparagine 343 each carry an N-linked (GlcNAc...) asparagine glycan. 2 EGF-like domains span residues 332 to 368 and 370 to 406; these read DVSECSLILCENGTDGIKISNDVMCICSPIFTDLLCK and FQTSCESFPLKNNATFKKCEKDYHCSCMSGFTGKNCE. Intrachain disulfides connect cysteine 341/cysteine 356 and cysteine 358/cysteine 367. N-linked (GlcNAc...) asparagine glycosylation is present at asparagine 382. The cysteines at positions 396 and 405 are disulfide-linked. Asparagine 506, asparagine 520, asparagine 521, asparagine 566, and asparagine 573 each carry an N-linked (GlcNAc...) asparagine glycan. EGF-like domains lie at 566–602, 604–641, and 643–679; these read NITDDQENKSQHEAICEDEINRPRCSCSLSYIGRLCV, NVDYCLGNQSISVHGLCLALSHNCNCSDLQKYEGNICE, and DIEDCKSVSCKNGTTSIHLRGYFFYKCVPGFKGTRCE. 2 disulfides stabilise this stretch: cysteine 592–cysteine 601 and cysteine 608–cysteine 620. 2 N-linked (GlcNAc...) asparagine glycosylation sites follow: asparagine 611 and asparagine 628. An intrachain disulfide couples cysteine 629 to cysteine 640. An N-linked (GlcNAc...) asparagine glycan is attached at asparagine 654. Cystine bridges form between cysteine 669/cysteine 678, cysteine 685/cysteine 696, cysteine 690/cysteine 705, and cysteine 707/cysteine 719. Positions 681 to 720 constitute an EGF-like 9; calcium-binding domain; the sequence is DLDECALHPCKSGATCIDQPGNYFCQCGPPFKVVDGFSCL. One can recognise an EGF-like 10 domain in the interval 733 to 769; that stretch reads NIDNCILNAFEHNSTYKDLHLSYQCVCLSGWEGNFCE. N-linked (GlcNAc...) asparagine glycosylation occurs at asparagine 745. 34 disulfides stabilise this stretch: cysteine 759–cysteine 768, cysteine 775–cysteine 786, cysteine 780–cysteine 795, cysteine 797–cysteine 806, cysteine 813–cysteine 824, cysteine 818–cysteine 835, cysteine 837–cysteine 846, cysteine 853–cysteine 866, cysteine 860–cysteine 876, cysteine 878–cysteine 887, cysteine 894–cysteine 905, cysteine 899–cysteine 914, cysteine 916–cysteine 925, cysteine 932–cysteine 943, cysteine 937–cysteine 952, cysteine 954–cysteine 963, cysteine 970–cysteine 981, cysteine 975–cysteine 990, cysteine 992–cysteine 1001, cysteine 1008–cysteine 1019, cysteine 1013–cysteine 1028, cysteine 1030–cysteine 1039, cysteine 1046–cysteine 1056, cysteine 1051–cysteine 1065, cysteine 1067–cysteine 1076, cysteine 1083–cysteine 1094, cysteine 1088–cysteine 1103, cysteine 1105–cysteine 1114, cysteine 1121–cysteine 1137, cysteine 1131–cysteine 1147, cysteine 1149–cysteine 1158, cysteine 1165–cysteine 1176, cysteine 1170–cysteine 1185, and cysteine 1187–cysteine 1196. The EGF-like 11; calcium-binding domain maps to 771–807; sequence ESNECKMNPCKNNSTCTDLYKSYRCECTSGWTGQNCS. N-linked (GlcNAc...) asparagine glycosylation is found at asparagine 782, asparagine 783, and asparagine 805. EGF-like domains are found at residues 809-847, 849-888, and 890-926; these read EINECDSDPCMNGGLCHESTIPGQFVCLCPPLYTGQFCH, RYNPCDLLNNPCRNNSTCLALVDGNQHCICREEFEGKHCE, and DVKECLFLSCQDYGDCEDMVNNFRCICRPGFSGSLCE. N-linked (GlcNAc...) asparagine glycans are attached at residues asparagine 862 and asparagine 863. The region spanning 928 to 964 is the EGF-like 15; calcium-binding domain; it reads EINECSSEPCKNNGTCVDLTNRFFCNCEPGYHGPFCE. Asparagine 940 is a glycosylation site (N-linked (GlcNAc...) asparagine). The 37-residue stretch at 966–1002 folds into the EGF-like 16 domain; sequence EVNKCKISPCLDEENCVYRTDRYNCLCAPGYTGINCE. Residues 1004–1040 enclose the EGF-like 17; calcium-binding domain; the sequence is NLDECLSEPCLHDGVCIDGINHYTCDCKSGFFGTHCE. EGF-like domains are found at residues 1042–1077, 1079–1115, and 1117–1159; these read NANDCLSNPCLHGRCTEPINEYPCSCDADGTSIQCK, KINDCTSMPCMNEGFCQKSAHGFTCICPRGYTGAYCE, and SIDN…QFCE. Residues 1161 to 1197 form the EGF-like 21; calcium-binding domain; the sequence is NINECSSSPCLHGANCEDHINGYVCKCQPGWSGHHCE. N-linked (GlcNAc...) asparagine glycans are attached at residues asparagine 1509, asparagine 1906, asparagine 1941, and asparagine 2033. The Laminin G-like 1 domain maps to 1883 to 2063; it reads FSCVCYYGDS…AVRNYHINNC (181 aa). 4 disulfide bridges follow: cysteine 2037–cysteine 2063, cysteine 2103–cysteine 2114, cysteine 2108–cysteine 2128, and cysteine 2130–cysteine 2139. Residues 2099–2140 form the EGF-like 22 domain; sequence APSVCQEDVCHNGGTCRPIFLSSGIVSFQCDCPLHFTGRFCE. In terms of domain architecture, Laminin G-like 2 spans 2145–2339; sequence LFFPSFSGNS…NIENCHVPWC (195 aa). N-linked (GlcNAc...) asparagine glycans are attached at residues asparagine 2170, asparagine 2185, and asparagine 2228. 6 disulfide bridges follow: cysteine 2308/cysteine 2339, cysteine 2339/cysteine 2350, cysteine 2344/cysteine 2359, cysteine 2375/cysteine 2386, cysteine 2380/cysteine 2396, and cysteine 2398/cysteine 2407. 2 EGF-like domains span residues 2335-2368 and 2371-2408; these read HVPWCAHHLCRNNGTCLSDSENLFCECPRLYSGK and QFASCENNPCGNGATCVPKSGTDIICLCPYGRSGPLCT. N-linked (GlcNAc...) asparagine glycosylation occurs at asparagine 2347. N-linked (GlcNAc...) asparagine glycosylation is found at asparagine 2412, asparagine 2453, asparagine 2484, asparagine 2506, and asparagine 2532. Residues 2419 to 2609 form the Laminin G-like 3 domain; the sequence is SGTDAFGYTS…PNAGRSVGQC (191 aa). Cystine bridges form between cysteine 2576/cysteine 2609, cysteine 2614/cysteine 2625, and cysteine 2619/cysteine 2634. EGF-like domains lie at 2610-2646 and 2648-2689; these read HASPCSLMKCGNGGTCIESGTSVYCNCTTRWKGAFCT and TVSI…IYCE. Asparagine 2635 is a glycosylation site (N-linked (GlcNAc...) asparagine). 4 cysteine pairs are disulfide-bonded: cysteine 2636–cysteine 2645, cysteine 2652–cysteine 2668, cysteine 2662–cysteine 2677, and cysteine 2679–cysteine 2688. Positions 2717–2895 constitute a Laminin G-like 4 domain; that stretch reads DPSFRSSELS…AKGGSNVGDC (179 aa). N-linked (GlcNAc...) asparagine glycans are attached at residues asparagine 2775, asparagine 2800, and asparagine 2824. Cystine bridges form between cysteine 2868/cysteine 2895, cysteine 2900/cysteine 2911, cysteine 2905/cysteine 2920, and cysteine 2922/cysteine 2931. 2 EGF-like domains span residues 2896–2932 and 2933–2970; these read DGTACGYNTCRNGGECRVNGTTFSCRCLPDWAGNICN and QSAYCLNNLCLHQSLCIPDQSFSYSCLCTLGWVGRYCE. A glycan (N-linked (GlcNAc...) asparagine) is linked at asparagine 2914. Asparagine 2932 carries N-linked (GlcNAc...) asparagine glycosylation. 3 disulfide bridges follow: cysteine 2937-cysteine 2948, cysteine 2942-cysteine 2958, and cysteine 2960-cysteine 2969. N-linked (GlcNAc...) asparagine glycosylation is found at asparagine 2971, asparagine 3006, asparagine 3036, asparagine 3057, asparagine 3073, and asparagine 3082. The Laminin G-like 5 domain maps to 2975–3165; it reads FTTAKFMGNS…YDGDEQNEVT (191 aa).

The protein belongs to the EYS family. Expressed in retina (at protein level).

The protein localises to the cell projection. The protein resides in the cilium. It is found in the photoreceptor outer segment. Its subcellular location is the cytoplasm. It localises to the cytoskeleton. The protein localises to the cilium axoneme. The protein resides in the microtubule organizing center. It is found in the centrosome. Its subcellular location is the secreted. It localises to the extracellular space. The protein localises to the extracellular matrix. The protein resides in the interphotoreceptor matrix. Its function is as follows. Required to maintain the integrity of photoreceptor cells. Specifically required for normal morphology of the photoreceptor ciliary pocket, and might thus facilitate protein trafficking between the photoreceptor inner and outer segments via the transition zone. The polypeptide is Protein eyes shut homolog (Macaca fascicularis (Crab-eating macaque)).